Here is a 502-residue protein sequence, read N- to C-terminus: Neuronal acetylcholine receptor subunit alpha-7 (502 aa).

The first 23 residues, 1-23 (MGLRALMLWLLAAAGLVRESLQG), serve as a signal peptide directing secretion. Residues 24–233 (EFQRKLYKEL…VTMRRRTLYY (210 aa)) lie on the Extracellular side of the membrane. 2 residues coordinate Ca(2+): Arg-42 and Val-44. Residues Asn-46, Asn-90, and Asn-133 are each glycosylated (N-linked (GlcNAc...) asparagine). A disulfide bond links Cys-150 and Cys-164. Ca(2+) contacts are provided by Thr-172 and Tyr-210. Cys-212 and Cys-213 are disulfide-bonded. Transmembrane regions (helical) follow at residues 234–254 (GLNL…VFLL), 262–282 (ISLG…VAEI), and 295–315 (QYFA…VIVL). Over 316 to 469 (QYHHHDPDGG…WKFAASVVDR (154 aa)) the chain is Cytoplasmic. The chain crosses the membrane as a helical span at residues 470 to 490 (LCLMAFSVFTIICTIGILMSA).

The protein belongs to the ligand-gated ion channel (TC 1.A.9) family. Acetylcholine receptor (TC 1.A.9.1) subfamily. Alpha-7/CHRNA7 sub-subfamily. Homopentamer. Can also form heteropentamers with CHRNB2, mainly found in basal forebrain cholinergic neurons.

It is found in the postsynaptic cell membrane. The protein resides in the cell membrane. The catalysed reaction is Ca(2+)(in) = Ca(2+)(out). The enzyme catalyses K(+)(in) = K(+)(out). It catalyses the reaction Na(+)(in) = Na(+)(out). It carries out the reaction choline(out) = choline(in). The catalysed reaction is NH4(+)(in) = NH4(+)(out). The enzyme catalyses L-arginine(in) = L-arginine(out). It catalyses the reaction guanidine(out) = guanidine(in). Activated by a myriad of ligands such as acetylcholine, cytisine, nicotine, choline and epibatidine. Activity is modulated by positive allosteric modulators (PAMs), such as flavonoids, with a wide range of chemical diversity, pharmacological sensitivity and efficacy. AChR activity is inhibited by the antagonists alpha-conotoxons RgIA, ImI and ImII, small disulfide-constrained peptides from cone snails. In terms of biological role, component of neuronal acetylcholine receptors (nAChRs) that function as pentameric, ligand-gated cation channels with high calcium permeability among other activities. nAChRs are excitatory neurotrasnmitter receptors formed by a collection of nAChR subunits known to mediate synaptic transmission in the nervous system and the neuromuscular junction. Each nAchR subunit confers differential attributes to channel properties, including activation, deactivation and desensitization kinetics, pH sensitivity, cation permeability, and binding to allosteric modulators. CHRNA7 is an homooligomeric neuronal acetylcholine receptor abundantly expressed in the central nervous system. Characterized by a fast desensitization and high calcium permeability. Also expressed in non-neuronal cells such as immune cells like lymphocytes, monocytes and macrophages. This is Neuronal acetylcholine receptor subunit alpha-7 (CHRNA7) from Gallus gallus (Chicken).